A 116-amino-acid chain; its full sequence is MAAAAPGSGAAREEEGTGGDAATPQPPAPTSAPGARLSRLPLARVKALVKADPDVTLAGQEAIFILARAAELFVETIAKDAYCCAQQGKRKTLQRRDLDNAIEAVDEFAFLEGTLD.

Low complexity predominate over residues 1-10; it reads MAAAAPGSGA. A disordered region spans residues 1–36; that stretch reads MAAAAPGSGAAREEEGTGGDAATPQPPAPTSAPGAR.

As to quaternary structure, component of the DNA polymerase epsilon complex consisting of four subunits: the catalytic subunit POLE and the accessory subunits POLE2, POLE3 and POLE4. Interaction with POLE3 is a prerequisite for further binding with POLE and POLE2.

The protein localises to the nucleus. In terms of biological role, accessory component of the DNA polymerase epsilon complex. Participates in DNA repair and in chromosomal DNA replication. The sequence is that of DNA polymerase epsilon subunit 4 (POLE4) from Bos taurus (Bovine).